The sequence spans 237 residues: Small ribosomal subunit protein eS4 (237 aa).

In terms of domain architecture, S4 RNA-binding spans 37–100 (IPLAVLLRDV…NEYYRIIPDP (64 aa)).

It belongs to the eukaryotic ribosomal protein eS4 family.

In Caldivirga maquilingensis (strain ATCC 700844 / DSM 13496 / JCM 10307 / IC-167), this protein is Small ribosomal subunit protein eS4.